The chain runs to 87 residues: Costars family protein (87 aa).

It belongs to the costars family.

This chain is Costars family protein, found in Oryza sativa subsp. indica (Rice).